We begin with the raw amino-acid sequence, 885 residues long: Pyruvate, phosphate dikinase (885 aa).

An N-terminal region spans residues 1 to 342 (MQRVYAFEDG…LYMLQTRNGK (342 aa)). Arginine 91 contacts ATP. The interval 343 to 399 (MNATATVRTGVDMVEEGLITKEQAIMRIAPQSVDQLLHKNMPANYAEAPLVKGLPAS) is linker 1. The tract at residues 400–497 (PGAATGAVVF…EVHEGDILTI (98 aa)) is central. The active-site Tele-phosphohistidine intermediate is the histidine 454. A linker 2 region spans residues 498–533 (DGSTGCVYKGEVPLEEPQVGSGYFGTILKWANEIKK). The interval 534–885 (IGVFANADLP…QAQIRHPREN (352 aa)) is C-terminal. Substrate-binding residues include arginine 561, arginine 617, glutamate 752, glycine 773, threonine 774, asparagine 775, and aspartate 776. Residue glutamate 752 participates in Mg(2+) binding. Aspartate 776 serves as a coordination point for Mg(2+). The active-site Proton donor is the cysteine 839.

It belongs to the PEP-utilizing enzyme family. In terms of assembly, homodimer. Mg(2+) serves as cofactor.

The enzyme catalyses pyruvate + phosphate + ATP = phosphoenolpyruvate + AMP + diphosphate + H(+). Its function is as follows. Catalyzes the dephosphorylation of phosphoenolpyruvate and diphosphate to produce ATP. In Entamoeba histolytica (strain ATCC 30459 / HM-1:IMSS / ABRM), this protein is Pyruvate, phosphate dikinase.